Reading from the N-terminus, the 337-residue chain is tRNA N6-adenosine threonylcarbamoyltransferase (337 aa).

The Fe cation site is built by His114 and His118. Residues 136 to 140 (LVSGG), Asp169, Gly182, Asp186, and Asn275 contribute to the substrate site. Residue Asp301 coordinates Fe cation.

Belongs to the KAE1 / TsaD family. Fe(2+) is required as a cofactor.

The protein localises to the cytoplasm. It catalyses the reaction L-threonylcarbamoyladenylate + adenosine(37) in tRNA = N(6)-L-threonylcarbamoyladenosine(37) in tRNA + AMP + H(+). Functionally, required for the formation of a threonylcarbamoyl group on adenosine at position 37 (t(6)A37) in tRNAs that read codons beginning with adenine. Is involved in the transfer of the threonylcarbamoyl moiety of threonylcarbamoyl-AMP (TC-AMP) to the N6 group of A37, together with TsaE and TsaB. TsaD likely plays a direct catalytic role in this reaction. This Streptococcus thermophilus (strain ATCC BAA-491 / LMD-9) protein is tRNA N6-adenosine threonylcarbamoyltransferase.